A 581-amino-acid polypeptide reads, in one-letter code: Protein LYRIC (581 aa).

Over 1–49 the chain is Lumenal; the sequence is MAARSWQDELAQQAEEGSARLRELLSVGLGFLRTELGLDLGLEPKRYPS. The tract at residues 1–71 is activation of NF-kappa-B; the sequence is MAARSWQDEL…LLLFLLGYGW (71 aa). Residues 50–70 traverse the membrane as a helical segment; the sequence is WVILVGTGALGLLLLFLLGYG. At 71-581 the chain is on the cytoplasmic side; that stretch reads WAAACAGARK…KKKKKARRET (511 aa). The tract at residues 72-168 is interaction with BCCIP; sequence AAACAGARKK…EKSKKNKKKS (97 aa). The disordered stretch occupies residues 77–221; it reads GARKKRRSPP…DSGSLDSTIP (145 aa). An interaction with RELA region spans residues 100 to 204; it reads EDPAQLKNLR…ISHREKRQQR (105 aa). Over residues 108 to 126 the composition is skewed to basic and acidic residues; sequence LRSEEQKKKNRKKLPEKPK. Threonine 142 carries the phosphothreonine modification. A compositionally biased stretch (basic residues) spans 159 to 168; that stretch reads EKSKKNKKKS. Residue serine 179 is modified to Phosphoserine. Basic residues predominate over residues 197–207; the sequence is HREKRQQRKRD. 2 positions are modified to phosphoserine: serine 215 and serine 250. N6-acetyllysine is present on lysine 263. A disordered region spans residues 280 to 581; sequence VNGGGWSEKS…KKKKKARRET (302 aa). Residues serine 297, serine 305, and serine 310 each carry the phosphoserine modification. The span at 318–331 shows a compositional bias: polar residues; sequence QSAWTQDPGDTNAN. Residues serine 343 and serine 368 each carry the phosphoserine modification. 2 stretches are compositionally biased toward polar residues: residues 353–371 and 382–393; these read EPVSQSTTSDYQWDGSRNQ and NGLSSADPSSDW. The segment at 380 to 442 is lung-homing for mammary tumors; the sequence is GLNGLSSADP…EGALPTGKSK (63 aa). Phosphoserine occurs at positions 414 and 425. Residues 421–433 show a composition bias toward basic and acidic residues; that stretch reads DQKDSDDDKEKGE. Residues 440–450 show a composition bias toward basic residues; sequence KSKKKKKKKKK. Phosphoserine is present on residues serine 456, serine 477, serine 493, and serine 495. 2 stretches are compositionally biased toward polar residues: residues 519–535 and 548–567; these read PSVTLSKGDSDKSSSQV and NAKQNSVPPSQTKSETNWES. Position 567 is a phosphoserine (serine 567). A compositionally biased stretch (basic residues) spans 570–581; the sequence is QIKKKKKARRET.

As to quaternary structure, interacts with BCCIP, CREBBP/CBP and RELA/p65. In terms of tissue distribution, widely expressed, with highest levels in liver, kidney, prostate and small intestine. Not detected in endothelial cells.

Its subcellular location is the endoplasmic reticulum membrane. It localises to the nucleus membrane. It is found in the cell junction. The protein resides in the tight junction. The protein localises to the nucleus. Its subcellular location is the nucleolus. It localises to the cytoplasm. It is found in the perinuclear region. In terms of biological role, down-regulates SLC1A2/EAAT2 promoter activity when expressed ectopically. Activates the nuclear factor kappa-B (NF-kappa-B) transcription factor. Promotes anchorage-independent growth of immortalized melanocytes and astrocytes which is a key component in tumor cell expansion. Promotes lung metastasis and also has an effect on bone and brain metastasis, possibly by enhancing the seeding of tumor cells to the target organ endothelium. Induces chemoresistance. In Rattus norvegicus (Rat), this protein is Protein LYRIC (Mtdh).